A 419-amino-acid chain; its full sequence is CinA-like protein (419 aa).

It belongs to the CinA family.

This chain is CinA-like protein, found in Picosynechococcus sp. (strain ATCC 27264 / PCC 7002 / PR-6) (Agmenellum quadruplicatum).